Reading from the N-terminus, the 488-residue chain is Protein nucleotidyltransferase YdiU (488 aa).

Positions 91, 93, 94, 114, 126, 127, 177, and 184 each coordinate ATP. Asp253 serves as the catalytic Proton acceptor. Asn254 and Asp263 together coordinate Mg(2+). ATP is bound at residue Asp263.

It belongs to the SELO family. Mg(2+) is required as a cofactor. The cofactor is Mn(2+).

The enzyme catalyses L-seryl-[protein] + ATP = 3-O-(5'-adenylyl)-L-seryl-[protein] + diphosphate. The catalysed reaction is L-threonyl-[protein] + ATP = 3-O-(5'-adenylyl)-L-threonyl-[protein] + diphosphate. It catalyses the reaction L-tyrosyl-[protein] + ATP = O-(5'-adenylyl)-L-tyrosyl-[protein] + diphosphate. It carries out the reaction L-histidyl-[protein] + UTP = N(tele)-(5'-uridylyl)-L-histidyl-[protein] + diphosphate. The enzyme catalyses L-seryl-[protein] + UTP = O-(5'-uridylyl)-L-seryl-[protein] + diphosphate. The catalysed reaction is L-tyrosyl-[protein] + UTP = O-(5'-uridylyl)-L-tyrosyl-[protein] + diphosphate. Nucleotidyltransferase involved in the post-translational modification of proteins. It can catalyze the addition of adenosine monophosphate (AMP) or uridine monophosphate (UMP) to a protein, resulting in modifications known as AMPylation and UMPylation. The chain is Protein nucleotidyltransferase YdiU from Bacillus cereus (strain ATCC 14579 / DSM 31 / CCUG 7414 / JCM 2152 / NBRC 15305 / NCIMB 9373 / NCTC 2599 / NRRL B-3711).